A 295-amino-acid polypeptide reads, in one-letter code: 4-hydroxy-tetrahydrodipicolinate synthase (295 aa).

Thr-47 lines the pyruvate pocket. Tyr-135 functions as the Proton donor/acceptor in the catalytic mechanism. Catalysis depends on Lys-163, which acts as the Schiff-base intermediate with substrate. Residue Ile-206 coordinates pyruvate.

This sequence belongs to the DapA family. As to quaternary structure, homodimer.

Its subcellular location is the cytoplasm. The enzyme catalyses L-aspartate 4-semialdehyde + pyruvate = (2S,4S)-4-hydroxy-2,3,4,5-tetrahydrodipicolinate + H2O + H(+). Its pathway is amino-acid biosynthesis; L-lysine biosynthesis via DAP pathway; (S)-tetrahydrodipicolinate from L-aspartate: step 3/4. Its activity is regulated as follows. Is not feedback inhibited by lysine. Its function is as follows. Catalyzes the condensation of (S)-aspartate-beta-semialdehyde [(S)-ASA] and pyruvate to 4-hydroxy-tetrahydrodipicolinate (HTPA). The sequence is that of 4-hydroxy-tetrahydrodipicolinate synthase from Staphylococcus aureus (strain COL).